Consider the following 295-residue polypeptide: uncharacterized protein (295 aa).

This is an uncharacterized protein from Methanocaldococcus jannaschii (strain ATCC 43067 / DSM 2661 / JAL-1 / JCM 10045 / NBRC 100440) (Methanococcus jannaschii).